Consider the following 925-residue polypeptide: Glutamate receptor 3.1 (925 aa).

The first 25 residues, 1–25, serve as a signal peptide directing secretion; it reads MLSSMNWVLLSFIIVLGGGLLLSEG. The Extracellular portion of the chain corresponds to 26–591; sequence ASSSRPPVIK…NPWAFLRPFT (566 aa). N-linked (GlcNAc...) asparagine glycans are attached at residues N309, N341, N359, N419, N437, and N488. The chain crosses the membrane as a helical span at residues 592–612; it reads LPMWAVTASFFVIVGAAIWIL. Residues 613–621 lie on the Cytoplasmic side of the membrane; it reads EHRINDEFR. A helical membrane pass occupies residues 622–642; the sequence is GPPRRQIITILWFTFSTMFFS. Residues 643-653 lie on the Cytoplasmic side of the membrane; it reads HRETTVSTLGR. The helical transmembrane segment at 654–674 threads the bilayer; the sequence is MVLLIWLFVVLIITSSYTASL. The Extracellular segment spans residues 675–831; that stretch reads TSILTVQQLN…GDSEQLNVHS (157 aa). N-linked (GlcNAc...) asparagine glycans are attached at residues N738 and N812. A helical membrane pass occupies residues 832-852; that stretch reads FWGMFLVVGIACLVALFIHFF. The Cytoplasmic portion of the chain corresponds to 853 to 925; the sequence is KIIRDFCKDT…ISRTASRRPI (73 aa). A disordered region spans residues 897–925; it reads KRRLKRKRNNDHSMNANSIISRTASRRPI. Over residues 908 to 919 the composition is skewed to polar residues; the sequence is HSMNANSIISRT.

The protein belongs to the glutamate-gated ion channel (TC 1.A.10.1) family. May form heteromers. Expressed predominantly in roots. Firt detected in the vascular tissues of the cotyledons, and later in the vasculature of all organs. In leaves, preferentially expressed in guard cells.

It is found in the membrane. In terms of biological role, glutamate-gated receptor that probably acts as a non-selective cation channel. May be involved in light-signal transduction and calcium homeostasis via the regulation of calcium influx into cells. Required for the long-term calcium oscillation-regulated stomatal movements. This Arabidopsis thaliana (Mouse-ear cress) protein is Glutamate receptor 3.1 (GLR3.1).